The chain runs to 431 residues: Adenylosuccinate synthetase (431 aa).

Residues 13 to 19 and 41 to 43 each bind GTP; these read GDEGKGK and GHT. D14 acts as the Proton acceptor in catalysis. Residues D14 and G41 each coordinate Mg(2+). Residues 14 to 17, 39 to 42, T130, R144, Q225, T240, and R304 each bind IMP; these read DEGK and NAGH. H42 (proton donor) is an active-site residue. Residue 300-306 participates in substrate binding; it reads SVTGRPR. Residues R306, 332 to 334, and 414 to 416 each bind GTP; these read KLD and STG.

It belongs to the adenylosuccinate synthetase family. As to quaternary structure, homodimer. It depends on Mg(2+) as a cofactor.

The protein resides in the cytoplasm. It catalyses the reaction IMP + L-aspartate + GTP = N(6)-(1,2-dicarboxyethyl)-AMP + GDP + phosphate + 2 H(+). Its pathway is purine metabolism; AMP biosynthesis via de novo pathway; AMP from IMP: step 1/2. In terms of biological role, plays an important role in the de novo pathway of purine nucleotide biosynthesis. Catalyzes the first committed step in the biosynthesis of AMP from IMP. The polypeptide is Adenylosuccinate synthetase (Bordetella petrii (strain ATCC BAA-461 / DSM 12804 / CCUG 43448)).